We begin with the raw amino-acid sequence, 881 residues long: Protein P (881 aa).

Residues 1–184 are terminal protein domain (TP); that stretch reads MHPFYQLFRN…GKPYSWEHRQ (184 aa). Positions 185–384 are spacer; sequence LEQHNGQQHK…YCLHHIVSSI (200 aa). Positions 263-351 are disordered; that stretch reads IPCESKAPSE…PAGICRGTES (89 aa). Composition is skewed to polar residues over residues 270-279 and 287-314; these read PSEQQQSSLR and NQIQ…IQSG. The span at 326–340 shows a compositional bias: basic and acidic residues; it reads FERHTPSFDNEKSDR. Residues 385-726 are polymerase/reverse transcriptase domain (RT); it reads DDWGPCTFDG…YGELWPVARQ (342 aa). A Reverse transcriptase domain is found at 395–636; sequence DVTIRSPRTP…HTLHFMGYTI (242 aa). The Mg(2+) site is built by aspartate 467, aspartate 587, and aspartate 588.

Belongs to the hepadnaviridae P protein family.

The enzyme catalyses DNA(n) + a 2'-deoxyribonucleoside 5'-triphosphate = DNA(n+1) + diphosphate. The catalysed reaction is Endonucleolytic cleavage to 5'-phosphomonoester.. Activated by host HSP70 and HSP40 in vitro to be able to bind the epsilon loop of the pgRNA. Because deletion of the RNase H region renders the protein partly chaperone-independent, the chaperones may be needed indirectly to relieve occlusion of the RNA-binding site by this domain. Inhibited by several reverse-transcriptase inhibitors: Lamivudine, Adefovir and Entecavir. In terms of biological role, multifunctional enzyme that converts the viral RNA genome into dsDNA in viral cytoplasmic capsids. This enzyme displays a DNA polymerase activity that can copy either DNA or RNA templates, and a ribonuclease H (RNase H) activity that cleaves the RNA strand of RNA-DNA heteroduplexes in a partially processive 3'- to 5'-endonucleasic mode. Neo-synthesized pregenomic RNA (pgRNA) are encapsidated together with the P protein, and reverse-transcribed inside the nucleocapsid. Initiation of reverse-transcription occurs first by binding the epsilon loop on the pgRNA genome, and is initiated by protein priming, thereby the 5'-end of (-)DNA is covalently linked to P protein. Partial (+)DNA is synthesized from the (-)DNA template and generates the relaxed circular DNA (RC-DNA) genome. After budding and infection, the RC-DNA migrates in the nucleus, and is converted into a plasmid-like covalently closed circular DNA (cccDNA). The activity of P protein does not seem to be necessary for cccDNA generation, and is presumably released from (+)DNA by host nuclear DNA repair machinery. The sequence is that of Protein P from Ground squirrel hepatitis virus (strain 27) (GSHV).